The sequence spans 445 residues: ATP-dependent protease ATPase subunit HslU (445 aa).

ATP-binding positions include isoleucine 17, 59–64 (GVGKTE), aspartate 254, glutamate 319, and arginine 391.

The protein belongs to the ClpX chaperone family. HslU subfamily. A double ring-shaped homohexamer of HslV is capped on each side by a ring-shaped HslU homohexamer. The assembly of the HslU/HslV complex is dependent on binding of ATP.

The protein resides in the cytoplasm. In terms of biological role, ATPase subunit of a proteasome-like degradation complex; this subunit has chaperone activity. The binding of ATP and its subsequent hydrolysis by HslU are essential for unfolding of protein substrates subsequently hydrolyzed by HslV. HslU recognizes the N-terminal part of its protein substrates and unfolds these before they are guided to HslV for hydrolysis. This is ATP-dependent protease ATPase subunit HslU from Pseudomonas fluorescens (strain SBW25).